Reading from the N-terminus, the 294-residue chain is S-adenosylmethionine uptake transporter (294 aa).

10 consecutive transmembrane segments (helical) span residues 8 to 28 (YLTG…NDVI), 41 to 61 (VAFF…VYYG), 74 to 91 (ILRG…TYGL), 98 to 118 (TATV…VFFL), 121 to 141 (NIIW…VVTL), 148 to 168 (FNPE…LDII), 177 to 197 (SMIS…LPVA), 207 to 227 (FELA…FFLL), 237 to 257 (ATAP…YFIF), and 260 to 280 (FPDK…LFII). EamA domains are found at residues 21-141 (SSSA…VVTL) and 160-280 (ISFA…LFII).

The protein belongs to the drug/metabolite transporter (DMT) superfamily. 10 TMS drug/metabolite exporter (DME) (TC 2.A.7.3) family.

Its subcellular location is the cell inner membrane. In terms of biological role, transports S-adenosylmethionine. This Rickettsia conorii (strain ATCC VR-613 / Malish 7) protein is S-adenosylmethionine uptake transporter (sam).